The chain runs to 438 residues: Dol-P-Man:Man(5)GlcNAc(2)-PP-Dol alpha-1,3-mannosyltransferase (438 aa).

Ser13 carries the phosphoserine modification. A run of 11 helical transmembrane segments spans residues 41-61, 95-115, 123-143, 149-169, 172-192, 203-223, 231-251, 289-309, 332-352, 356-376, and 407-427; these read YTLL…FWVI, TGPL…FYAT, MAQN…FLIY, VPPF…SIFV, LFND…FLAQ, LAVS…FLLL, ALPK…PFLL, FHLA…LCRW, ALTP…GICF, LHYQ…WAMP, and AALH…PESF.

Belongs to the glycosyltransferase ALG3 family.

It is found in the endoplasmic reticulum membrane. The catalysed reaction is an alpha-D-Man-(1-&gt;2)-alpha-D-Man-(1-&gt;2)-alpha-D-Man-(1-&gt;3)-[alpha-D-Man-(1-&gt;6)]-beta-D-Man-(1-&gt;4)-beta-D-GlcNAc-(1-&gt;4)-alpha-D-GlcNAc-diphospho-di-trans,poly-cis-dolichol + a di-trans,poly-cis-dolichyl beta-D-mannosyl phosphate = an alpha-D-Man-(1-&gt;2)-alpha-D-Man-(1-&gt;2)-alpha-D-Man-(1-&gt;3)-[alpha-D-Man-(1-&gt;3)-alpha-D-Man-(1-&gt;6)]-beta-D-Man-(1-&gt;4)-beta-D-GlcNAc-(1-&gt;4)-alpha-D-GlcNAc-diphospho-di-trans,poly-cis-dolichol + a di-trans,poly-cis-dolichyl phosphate + H(+). It functions in the pathway protein modification; protein glycosylation. Dol-P-Man:Man(5)GlcNAc(2)-PP-Dol alpha-1,3-mannosyltransferase that operates in the biosynthetic pathway of dolichol-linked oligosaccharides, the glycan precursors employed in protein asparagine (N)-glycosylation. The assembly of dolichol-linked oligosaccharides begins on the cytosolic side of the endoplasmic reticulum membrane and finishes in its lumen. The sequential addition of sugars to dolichol pyrophosphate produces dolichol-linked oligosaccharides containing fourteen sugars, including two GlcNAcs, nine mannoses and three glucoses. Once assembled, the oligosaccharide is transferred from the lipid to nascent proteins by oligosaccharyltransferases. In the lumen of the endoplasmic reticulum, adds the first dolichyl beta-D-mannosyl phosphate derived mannose in an alpha-1,3 linkage to Man(5)GlcNAc(2)-PP-dolichol to produce Man(6)GlcNAc(2)-PP-dolichol. Man(6)GlcNAc(2)-PP-dolichol is a substrate for ALG9, the following enzyme in the biosynthetic pathway. The sequence is that of Dol-P-Man:Man(5)GlcNAc(2)-PP-Dol alpha-1,3-mannosyltransferase from Mus musculus (Mouse).